An 894-amino-acid polypeptide reads, in one-letter code: Disease resistance protein SUMM2 (894 aa).

A coiled-coil region spans residues 31–71 (ELSKNVVAMKKDMEVLKKKRDDVKRRVDIEEFTRRRERLSQ). The NB-ARC domain occupies 140–443 (TLATPIARIE…CEGFIDENES (304 aa)). 183-190 (GMGGVGKT) serves as a coordination point for ATP. LRR repeat units lie at residues 517–538 (SVRR…PECL), 539–561 (ELTT…FFRC), 564–586 (MLVV…ISKL), 588–610 (SLRY…QELK), 611–633 (KLRY…SNIS), 634–656 (SLRK…EELQ), and 660–681 (HLEV…LNAP).

The protein belongs to the disease resistance NB-LRR family. As to quaternary structure, interacts with PAT1.

Negatively regulated by the MEKK1-MKK1-MKK2-MPK4 kinase cascade. Its function is as follows. Disease resistance protein that mediates defense responses against the bacterial pathogen Pseudomonas syringae pv tomato strain DC3000, and the virulent oomycete Hyaloperonospora arabidopsidis isolate Noco2. Becomes active when the MEKK1-MKK1-MKK2-MPK4 kinase cascade is disrupted by the microbial effector hopAI1. Does not seem to be required for the activation of MPK4 by flg22, or flg22-induced up-regulation of PAD3. Functions downstream of MEKK2/SUMM1 in immune responses, including cell death and defense responses. This Arabidopsis thaliana (Mouse-ear cress) protein is Disease resistance protein SUMM2.